The primary structure comprises 243 residues: MNSKQDRIYAKPAQTISDFQFDSRVAGVFNDMIRRSVPGYNQIIATLGDFARRYVTPNSKVFDLGSSLGSATLSIRRQIEGRQCQIIAIDNSQSMIERCEENLAAYVSDTQVTLVCDDIRNVDINNASMVVLNFTLQFLPPEDRDTLIKRIYDGMLPGGILVLSEKVKFDDACIQTLLDEQHLDFKRANGYSELEISQKRSALENVMRTDTLVQHQQRITDSGFSHFSVWFQCFNFASMVAIK.

S-adenosyl-L-methionine is bound by residues Y40, 65-67, 90-91, 118-119, N133, and R200; these read GSS, DN, and DI.

Belongs to the class I-like SAM-binding methyltransferase superfamily. Cx-SAM synthase family. In terms of assembly, homodimer.

It carries out the reaction prephenate + S-adenosyl-L-methionine = carboxy-S-adenosyl-L-methionine + 3-phenylpyruvate + H2O. Catalyzes the conversion of S-adenosyl-L-methionine (SAM) to carboxy-S-adenosyl-L-methionine (Cx-SAM). This is Carboxy-S-adenosyl-L-methionine synthase from Shewanella denitrificans (strain OS217 / ATCC BAA-1090 / DSM 15013).